The following is a 211-amino-acid chain: Thiamine-phosphate synthase (211 aa).

Residues 37–41 and Asn-69 each bind 4-amino-2-methyl-5-(diphosphooxymethyl)pyrimidine; that span reads QLRIK. Mg(2+) is bound by residues Asp-70 and Asp-89. Ser-108 serves as a coordination point for 4-amino-2-methyl-5-(diphosphooxymethyl)pyrimidine. Residue 134–136 participates in 2-[(2R,5Z)-2-carboxy-4-methylthiazol-5(2H)-ylidene]ethyl phosphate binding; the sequence is TQT. Lys-137 is a binding site for 4-amino-2-methyl-5-(diphosphooxymethyl)pyrimidine. Residues Gly-166 and 186–187 contribute to the 2-[(2R,5Z)-2-carboxy-4-methylthiazol-5(2H)-ylidene]ethyl phosphate site; that span reads VS.

It belongs to the thiamine-phosphate synthase family. It depends on Mg(2+) as a cofactor.

The catalysed reaction is 2-[(2R,5Z)-2-carboxy-4-methylthiazol-5(2H)-ylidene]ethyl phosphate + 4-amino-2-methyl-5-(diphosphooxymethyl)pyrimidine + 2 H(+) = thiamine phosphate + CO2 + diphosphate. It catalyses the reaction 2-(2-carboxy-4-methylthiazol-5-yl)ethyl phosphate + 4-amino-2-methyl-5-(diphosphooxymethyl)pyrimidine + 2 H(+) = thiamine phosphate + CO2 + diphosphate. It carries out the reaction 4-methyl-5-(2-phosphooxyethyl)-thiazole + 4-amino-2-methyl-5-(diphosphooxymethyl)pyrimidine + H(+) = thiamine phosphate + diphosphate. It participates in cofactor biosynthesis; thiamine diphosphate biosynthesis; thiamine phosphate from 4-amino-2-methyl-5-diphosphomethylpyrimidine and 4-methyl-5-(2-phosphoethyl)-thiazole: step 1/1. Functionally, condenses 4-methyl-5-(beta-hydroxyethyl)thiazole monophosphate (THZ-P) and 2-methyl-4-amino-5-hydroxymethyl pyrimidine pyrophosphate (HMP-PP) to form thiamine monophosphate (TMP). In Salmonella paratyphi B (strain ATCC BAA-1250 / SPB7), this protein is Thiamine-phosphate synthase.